A 254-amino-acid polypeptide reads, in one-letter code: Alcohol dehydrogenase (254 aa).

10-33 serves as a coordination point for NAD(+); it reads FVAGLGGIGLDTSREIVKSGPKNL. S138 is a substrate binding site. Y151 acts as the Proton acceptor in catalysis.

It belongs to the short-chain dehydrogenases/reductases (SDR) family. In terms of assembly, homodimer.

The enzyme catalyses a primary alcohol + NAD(+) = an aldehyde + NADH + H(+). The catalysed reaction is a secondary alcohol + NAD(+) = a ketone + NADH + H(+). The polypeptide is Alcohol dehydrogenase (Adh) (Drosophila flavomontana (Fruit fly)).